The following is a 565-amino-acid chain: NAD-dependent malic enzyme (565 aa).

Tyr104 (proton donor) is an active-site residue. Residue Arg157 participates in NAD(+) binding. The Proton acceptor role is filled by Lys175. Residues Glu246, Asp247, and Asp270 each contribute to the a divalent metal cation site. Residues Asp270 and Asn418 each coordinate NAD(+).

This sequence belongs to the malic enzymes family. Homotetramer. It depends on Mg(2+) as a cofactor. Mn(2+) is required as a cofactor.

The enzyme catalyses (S)-malate + NAD(+) = pyruvate + CO2 + NADH. It carries out the reaction oxaloacetate + H(+) = pyruvate + CO2. The chain is NAD-dependent malic enzyme from Sodalis glossinidius (strain morsitans).